The sequence spans 648 residues: Zinc finger protein 202 (648 aa).

Lysine 22 participates in a covalent cross-link: Glycyl lysine isopeptide (Lys-Gly) (interchain with G-Cter in SUMO2). The 82-residue stretch at 46-127 folds into the SCAN box domain; it reads HQNFRRFRYQ…VTLVEGLQKQ (82 aa). Positions 146–221 are disordered; the sequence is SEETVHLGVE…PDLPAERSSG (76 aa). Over residues 165-182 the composition is skewed to polar residues; sequence PVQSSTPEQSPEETTQSP. The region spanning 237-308 is the KRAB domain; the sequence is VTFKDVAVCF…DIQEPQETQE (72 aa). 2 C2H2-type zinc fingers span residues 397 to 419 and 425 to 447; these read HDCSVCGKSFTCNSHLVRHLRTH and YKCMECGKSYTRSSHLARHQKVH. Residues lysine 454 and lysine 460 each participate in a glycyl lysine isopeptide (Lys-Gly) (interchain with G-Cter in SUMO2) cross-link. The residue at position 466 (serine 466) is a Phosphoserine. Residues 481–503 form a C2H2-type 3 zinc finger; it reads YRCDDCGKHFRWTSDLVRHQRTH. Residues lysine 507 and lysine 521 each participate in a glycyl lysine isopeptide (Lys-Gly) (interchain with G-Cter in SUMO2) cross-link. 5 C2H2-type zinc fingers span residues 509 to 531, 537 to 559, 565 to 587, 593 to 615, and 621 to 643; these read FFCTICGKSFSQKSVLTTHQRIH, YLCGECGEDFSEHRRYLAHRKTH, YLCSECGRCFTHSAAFAKHLRGH, CRCNECGKSFSRRDHLVRHQRTH, and FTCPTCGKSFSRGYHLIRHQRTH.

As to quaternary structure, interacts with SDP1. Highly expressed in testis. Also expressed in breast carcinoma cell lines.

It localises to the nucleus. Its function is as follows. Transcriptional repressor that binds to elements found predominantly in genes that participate in lipid metabolism. Among its targets are structural components of lipoprotein particles (apolipoproteins AIV, CIII, and E), enzymes involved in lipid processing (lipoprotein lipase, lecithin cholesteryl ester transferase), transporters involved in lipid homeostasis (ABCA1, ABCG1), and several genes involved in processes related to energy metabolism and vascular disease. The sequence is that of Zinc finger protein 202 (ZNF202) from Homo sapiens (Human).